A 504-amino-acid polypeptide reads, in one-letter code: ATP synthase subunit alpha, chloroplastic (504 aa).

170–177 (GDRQTGKT) serves as a coordination point for ATP. Phosphothreonine is present on threonine 257.

The protein belongs to the ATPase alpha/beta chains family. F-type ATPases have 2 components, CF(1) - the catalytic core - and CF(0) - the membrane proton channel. CF(1) has five subunits: alpha(3), beta(3), gamma(1), delta(1), epsilon(1). CF(0) has four main subunits: a, b, b' and c.

The protein localises to the plastid. It localises to the chloroplast thylakoid membrane. It catalyses the reaction ATP + H2O + 4 H(+)(in) = ADP + phosphate + 5 H(+)(out). Its function is as follows. Produces ATP from ADP in the presence of a proton gradient across the membrane. The alpha chain is a regulatory subunit. The sequence is that of ATP synthase subunit alpha, chloroplastic from Nasturtium officinale (Watercress).